The primary structure comprises 563 residues: Serine palmitoyltransferase 3 (563 aa).

The span at 1–29 (MANLNDSAVTNGTLHNPKTQQGKRQSTGC) shows a compositional bias: polar residues. The interval 1-32 (MANLNDSAVTNGTLHNPKTQQGKRQSTGCVKN) is disordered. Residues 59-79 (PLYVYVLTYMGYGIGILFGYL) form a helical membrane-spanning segment. Lys371 carries the post-translational modification N6-(pyridoxal phosphate)lysine.

The protein belongs to the class-II pyridoxal-phosphate-dependent aminotransferase family. Component of the serine palmitoyltransferase (SPT) complex, which is composed of SPTLC1, SPTLC2 or SPTLC3 and SPTSSA or SPTSSB. The heterodimer consisting of SPTLC1 and SPTLC2/SPTLC3 forms the catalytic core of the enzyme, while SPTSSA or SPTSSB subunits determine substrate specificity. SPT also interacts with ORMDL proteins, especially ORMDL3, which negatively regulate SPT activity in the presence of ceramides. Requires pyridoxal 5'-phosphate as cofactor. In terms of tissue distribution, expressed in white and brown adipose tissues.

It localises to the endoplasmic reticulum membrane. The catalysed reaction is L-serine + hexadecanoyl-CoA + H(+) = 3-oxosphinganine + CO2 + CoA. The enzyme catalyses dodecanoyl-CoA + L-serine + H(+) = 3-oxotetradecasphinganine + CO2 + CoA. It catalyses the reaction tetradecanoyl-CoA + L-serine + H(+) = 3-oxohexadecasphinganine + CO2 + CoA. It carries out the reaction octadecanoyl-CoA + L-serine + H(+) = 3-oxoeicosasphinganine + CO2 + CoA. The protein operates within lipid metabolism; sphingolipid metabolism. Its activity is regulated as follows. SPT complex catalytic activity is negatively regulated by ORMDL proteins, including ORMDL3, in the presence of ceramides. This mechanism allows to maintain ceramide levels at sufficient concentrations for the production of complex sphingolipids, but which prevents the accumulation of ceramides to levels that trigger apoptosis. Functionally, component of the serine palmitoyltransferase multisubunit enzyme (SPT) that catalyzes the initial and rate-limiting step in sphingolipid biosynthesis by condensing L-serine and activated acyl-CoA (most commonly palmitoyl-CoA) to form long-chain bases. The SPT complex is composed of SPTLC1, SPTLC2 or SPTLC3 and SPTSSA or SPTSSB. Within this complex, the heterodimer consisting of SPTLC1 and SPTLC2/SPTLC3 forms the catalytic core. The composition of the serine palmitoyltransferase (SPT) complex determines the substrate preference. The SPTLC1-SPTLC2-SPTSSA complex shows a strong preference for C16-CoA substrate, while the SPTLC1-SPTLC3-SPTSSA isozyme uses both C14-CoA and C16-CoA as substrates, with a slight preference for C14-CoA. The SPTLC1-SPTLC2-SPTSSB complex shows a strong preference for C18-CoA substrate, while the SPTLC1-SPTLC3-SPTSSB isozyme displays an ability to use a broader range of acyl-CoAs, without apparent preference. The protein is Serine palmitoyltransferase 3 of Mus musculus (Mouse).